The following is a 371-amino-acid chain: Alanine dehydrogenase (371 aa).

Residues R15 and K74 each contribute to the substrate site. The Proton donor/acceptor role is filled by H95. Residues S133, 177 to 178, D197, S219, 238 to 239, 266 to 269, and 298 to 301 each bind NAD(+); these read QA, VL, IAID, and VANM. Residue D269 is the Proton donor/acceptor of the active site.

This sequence belongs to the AlaDH/PNT family. In terms of assembly, homohexamer. Trimer of dimer.

The catalysed reaction is L-alanine + NAD(+) + H2O = pyruvate + NH4(+) + NADH + H(+). It participates in amino-acid degradation; L-alanine degradation via dehydrogenase pathway; NH(3) and pyruvate from L-alanine: step 1/1. Catalyzes the reversible reductive amination of pyruvate to L-alanine. May play a role in cell wall synthesis as L-alanine is an important constituent of the peptidoglycan layer. The sequence is that of Alanine dehydrogenase (ald) from Staphylococcus epidermidis (strain ATCC 35984 / DSM 28319 / BCRC 17069 / CCUG 31568 / BM 3577 / RP62A).